Reading from the N-terminus, the 426-residue chain is Zinc finger CCCH domain-containing protein 13 (426 aa).

The C3H1-type zinc finger occupies 10-36 (AYKTKLCALWQRGNCNRDTCSFAHGHG). Disordered regions lie at residues 34–155 (GHGD…HEKQ), 253–317 (NEEG…DKTS), and 390–426 (NDAD…VDVE). 3 stretches are compositionally biased toward basic and acidic residues: residues 54-70 (RRDY…DRRF), 78-101 (PGRE…RDSS), and 108-120 (RKSE…KTDD). Residues 124–133 (NSSRSLSLSD) are compositionally biased toward low complexity. Residues 135-155 (NDEKKKDKFSSGDEKEDHEKQ) show a composition bias toward basic and acidic residues. A coiled-coil region spans residues 144-245 (SSGDEKEDHE…FERLGDLLAS (102 aa)). Residues 255–272 (EGSSVNEDLNERSPNTAA) are compositionally biased toward polar residues. Positions 284–317 (EEAKAVKKRRERDSDTMTRSDKYRSDVTDFDKTS) are enriched in basic and acidic residues. Acidic residues predominate over residues 416–426 (YEGDDEEVDVE).

The chain is Zinc finger CCCH domain-containing protein 13 from Oryza sativa subsp. japonica (Rice).